The primary structure comprises 518 residues: D-aminopeptidase (518 aa).

Catalysis depends on serine 62, which acts as the Nucleophile. Lysine 65 functions as the Proton donor/acceptor in the catalytic mechanism. The disordered stretch occupies residues 373–392 (FGTGPEKMDISGENEAQSSM). Positions 477 to 487 (QRSMDAPSPGE) are important for specificity. Aspartate 481 is a substrate binding site.

It belongs to the peptidase S12 family. As to quaternary structure, homodimer.

It carries out the reaction Release of an N-terminal D-amino acid from a peptide, Xaa-|-Yaa-, in which Xaa is preferably D-Ala, D-Ser or D-Thr. D-amino acid amides and methyl esters also are hydrolyzed, as is glycine amide.. Its activity is regulated as follows. Inhibited by beta-lactam compounds such as 6-aminopenicillic acid, 7-aminocephalosporanic acid, benzylpenicillin and ampicillin. Inhibited by p-chloromercuribenzoate. Hydrolyzes N-terminal residues in D-amino acid-containing peptides. This chain is D-aminopeptidase, found in Brucella melitensis biotype 2 (strain ATCC 23457).